The following is a 635-amino-acid chain: MLNRIQTLMKTANNYETIEILRNYLRLYIILARNEEGRGILIYDDNIDSVMSMMNITILEVIGLTHCTKLRSSPPIPMSRLFMDEIDHESYYSPKTSYYPLIDIIRKRSHEQGDIALALERYGIENTDSISEINEWLSSKGLACYRFVKFNDYRKQQMYRKFSRYTIVDSMIIGHIGHHYIWIKNLETYTRPEIDVLPFDIKCISRDELWARISSSLDQTHIKTIAVSVYGAITDNGPIPYMISTYPGNTFVNFNSVKDLILDFLDWIKDIMTSTRTIILVGYMSNLFDIPLLTVYWPNNCGWKIYNNTLISSDGARVIWMDVYKFSCGLSLQDYCYHWGSKPESRPFDLIKKSDAKRNTKSLVKESMASLKSLYEAFETQSGALEVLMSPCRMFSFSRIEDMFLTSVINRVSENTGMGMYYPTNDIPSLFIESSICLDYIIVNNQESNKYRIKSVLDIISSKQYPAGRPNYVKNGTKGKLYIALCKVTVPTNDHIPVVYHDDDNTTTFITVLTSVDIETAIRAGYSIVELGALQWDDNIPELKDCLLDSIKIIYDLNAVTTNNLLEQLIENINFNNSSIISLFYTFAISYCRAFIYSIMETIDPVYISQFSYKELYVSSSCKDINESMSQMVKL.

It belongs to the orthopoxvirus OPG056 family. As to quaternary structure, interacts with protein OPG164. Interacts with protein OPG064.

Its subcellular location is the virion membrane. The protein localises to the host endosome. Plays a role in intracellular enveloped virus (IEV) transport to the cell surface through microtubule transport. Together with protein OPG064, forms a complex that interacts with host KLC2 (kinesin light chain isoform 2) to engage the kinesin-1 complex and thereby promote IEV trafficking. This is Protein OPG056 (OPG056) from Cynomys gunnisoni (Gunnison's prairie dog).